The sequence spans 607 residues: Zinc metalloproteinase-disintegrin-like atrase-A (607 aa).

A signal peptide spans 1-20 (MIQALLVIICLAVFPHQGSS). Residues 21-196 (IILESGNVND…KTSQLTNTPE (176 aa)) constitute a propeptide that is removed on maturation. Positions 205-398 (KYIEFYLVVD…ERPQCILNKP (194 aa)) constitute a Peptidase M12B domain. Position 208 (Glu-208) interacts with Ca(2+). Residues Asn-220 and Asn-270 are each glycosylated (N-linked (GlcNAc...) asparagine). Position 290 (Asp-290) interacts with Ca(2+). N-linked (GlcNAc...) asparagine glycosylation occurs at Asn-301. Intrachain disulfides connect Cys-314–Cys-393, Cys-353–Cys-377, and Cys-355–Cys-360. 3 residues coordinate Zn(2+): His-338, His-342, and His-348. Ca(2+) is bound by residues Cys-393, Asn-396, Asn-411, Phe-413, Glu-415, Glu-418, and Asp-421. Residues 406–492 (RPVCGNNFVE…ECPTDSLQRN (87 aa)) enclose the Disintegrin domain. 14 cysteine pairs are disulfide-bonded: Cys-409/Cys-438, Cys-420/Cys-433, Cys-422/Cys-428, Cys-432/Cys-455, Cys-446/Cys-452, Cys-451/Cys-477, Cys-464/Cys-484, Cys-471/Cys-503, Cys-496/Cys-508, Cys-515/Cys-565, Cys-530/Cys-573, Cys-543/Cys-553, Cys-560/Cys-599, and Cys-593/Cys-604. A glycan (N-linked (GlcNAc...) asparagine) is linked at Asn-434. A D/ECD-tripeptide motif is present at residues 470–472 (DCD). Ca(2+) contacts are provided by Asp-472, Leu-473, Glu-475, Asp-487, and Ser-488. An N-linked (GlcNAc...) asparagine glycan is attached at Asn-522.

It belongs to the venom metalloproteinase (M12B) family. P-III subfamily. P-IIIa sub-subfamily. As to quaternary structure, monomer. Zn(2+) serves as cofactor. In terms of tissue distribution, expressed by the venom gland.

The protein localises to the secreted. Snake venom zinc metalloproteinase that inhibits platelet aggregation by cleaving platelet glycoprotein Ib alpha (GP1BA) at Glu-298/Asp-299, and abolishes binding of von Willebrand factor (VWF) to GPIBA. The sequence is that of Zinc metalloproteinase-disintegrin-like atrase-A from Naja atra (Chinese cobra).